Reading from the N-terminus, the 128-residue chain is Phosphoribosyl-AMP cyclohydrolase (128 aa).

Residue Asp-86 participates in Mg(2+) binding. Residue Cys-87 participates in Zn(2+) binding. Mg(2+) is bound by residues Asp-88 and Asp-90. Residues Cys-103 and Cys-110 each coordinate Zn(2+).

The protein belongs to the PRA-CH family. In terms of assembly, homodimer. Mg(2+) is required as a cofactor. Zn(2+) serves as cofactor.

Its subcellular location is the cytoplasm. The enzyme catalyses 1-(5-phospho-beta-D-ribosyl)-5'-AMP + H2O = 1-(5-phospho-beta-D-ribosyl)-5-[(5-phospho-beta-D-ribosylamino)methylideneamino]imidazole-4-carboxamide. Its pathway is amino-acid biosynthesis; L-histidine biosynthesis; L-histidine from 5-phospho-alpha-D-ribose 1-diphosphate: step 3/9. Catalyzes the hydrolysis of the adenine ring of phosphoribosyl-AMP. This chain is Phosphoribosyl-AMP cyclohydrolase, found in Roseobacter denitrificans (strain ATCC 33942 / OCh 114) (Erythrobacter sp. (strain OCh 114)).